The following is an 872-amino-acid chain: Alanine--tRNA ligase (872 aa).

Residues H567, H571, C669, and H673 each contribute to the Zn(2+) site.

Belongs to the class-II aminoacyl-tRNA synthetase family. It depends on Zn(2+) as a cofactor.

It localises to the cytoplasm. The catalysed reaction is tRNA(Ala) + L-alanine + ATP = L-alanyl-tRNA(Ala) + AMP + diphosphate. Its function is as follows. Catalyzes the attachment of alanine to tRNA(Ala) in a two-step reaction: alanine is first activated by ATP to form Ala-AMP and then transferred to the acceptor end of tRNA(Ala). Also edits incorrectly charged Ser-tRNA(Ala) and Gly-tRNA(Ala) via its editing domain. The sequence is that of Alanine--tRNA ligase from Streptococcus mutans serotype c (strain ATCC 700610 / UA159).